A 381-amino-acid polypeptide reads, in one-letter code: Alkanesulfonate monooxygenase (381 aa).

It belongs to the SsuD family. Homotetramer.

The catalysed reaction is an alkanesulfonate + FMNH2 + O2 = an aldehyde + FMN + sulfite + H2O + 2 H(+). In terms of biological role, catalyzes the desulfonation of aliphatic sulfonates. This is Alkanesulfonate monooxygenase from Cronobacter sakazakii (strain ATCC BAA-894) (Enterobacter sakazakii).